The sequence spans 92 residues: Small ribosomal subunit protein uS19 (92 aa).

This sequence belongs to the universal ribosomal protein uS19 family.

Functionally, protein S19 forms a complex with S13 that binds strongly to the 16S ribosomal RNA. In Sodalis glossinidius (strain morsitans), this protein is Small ribosomal subunit protein uS19.